The primary structure comprises 69 residues: Sperm protamine P1 (69 aa).

Basic residues-rich tracts occupy residues 1-30 and 37-69; these read MARFRPSRSRSRSLYRRRRRSRRQRSRRGG and KITRRGRGRGKSRRRRGRRSMRSSRRRRRRRRN. The tract at residues 1 to 69 is disordered; that stretch reads MARFRPSRSR…SRRRRRRRRN (69 aa).

This sequence belongs to the protamine P1 family. Testis.

The protein resides in the nucleus. The protein localises to the chromosome. In terms of biological role, protamines substitute for histones in the chromatin of sperm during the haploid phase of spermatogenesis. They compact sperm DNA into a highly condensed, stable and inactive complex. The protein is Sperm protamine P1 (PRM1) of Tachyglossus aculeatus aculeatus (Southeast Australian short-beaked echidna).